Consider the following 141-residue polypeptide: Nucleoside diphosphate kinase (141 aa).

ATP contacts are provided by lysine 11, phenylalanine 59, arginine 87, threonine 93, arginine 104, and asparagine 114. Histidine 117 serves as the catalytic Pros-phosphohistidine intermediate.

The protein belongs to the NDK family. In terms of assembly, homotetramer. The cofactor is Mg(2+).

Its subcellular location is the cytoplasm. The enzyme catalyses a 2'-deoxyribonucleoside 5'-diphosphate + ATP = a 2'-deoxyribonucleoside 5'-triphosphate + ADP. It catalyses the reaction a ribonucleoside 5'-diphosphate + ATP = a ribonucleoside 5'-triphosphate + ADP. Functionally, major role in the synthesis of nucleoside triphosphates other than ATP. The ATP gamma phosphate is transferred to the NDP beta phosphate via a ping-pong mechanism, using a phosphorylated active-site intermediate. This chain is Nucleoside diphosphate kinase, found in Laribacter hongkongensis (strain HLHK9).